The chain runs to 169 residues: Anaerobic nitrite reductase NSHB3 (169 aa).

The Globin domain occupies 15–165 (RFTEEQEALV…LVAAIKQGMK (151 aa)). Positions 48–52 (EVAPS) match the Homodimerization motif. Positions 58, 72, 76, 106, 110, and 111 each coordinate heme b. The short motif at 118 to 130 (DAHFEVAKFALLE) is the Homodimerization element.

This sequence belongs to the plant globin family. In terms of assembly, homodimer. Heme b is required as a cofactor.

The protein localises to the cytoplasm. It is found in the nucleus. The catalysed reaction is Fe(III)-heme b-[protein] + nitric oxide + H2O = Fe(II)-heme b-[protein] + nitrite + 2 H(+). Its function is as follows. Phytoglobin that reduces nitrite to nitric oxide under anoxic conditions (e.g. during flooding or in waterlogged soil). May not function as an oxygen storage or transport protein. Has an unusually high affinity for O(2) through an hexacoordinate heme iron because of a very low dissociation constant. The polypeptide is Anaerobic nitrite reductase NSHB3 (Oryza sativa subsp. indica (Rice)).